Reading from the N-terminus, the 102-residue chain is Small ribosomal subunit protein uS10 (102 aa).

The protein belongs to the universal ribosomal protein uS10 family. As to quaternary structure, part of the 30S ribosomal subunit.

In terms of biological role, involved in the binding of tRNA to the ribosomes. This chain is Small ribosomal subunit protein uS10, found in Streptococcus equi subsp. zooepidemicus (strain MGCS10565).